A 179-amino-acid chain; its full sequence is uncharacterized protein (179 aa).

Disordered stretches follow at residues 26–103 (LSAV…SYED) and 136–179 (KHKA…SWFN). The segment covering 34–61 (QQGKNEEQRQHDEWVAERNREIQQEKQR) has biased composition (basic and acidic residues). Residues 63 to 79 (ANAQAAANKRAATAAAN) show a composition bias toward low complexity. 2 stretches are compositionally biased toward basic and acidic residues: residues 82 to 103 (ARQD…SYED) and 158 to 179 (GGRD…SWFN).

This is an uncharacterized protein from Escherichia coli (strain K12).